A 237-amino-acid polypeptide reads, in one-letter code: MWSTVLVLALSVICEPVRIGLVVLMLNRRRPLLHLLTFLCGGYTMAGGVAMVTLVVLGATPLAGHFSVAEVQIGTGLIALLIAFALTTNVIGKHVRRATHARVGDDGGRVLRESVPPSGAHKLAVRARCFLQGDSLYVAGVSGLGAALPSANYMGAMAAILASGATPATQALAVVTFNVVAFTVAEVPLVSYLAAPRKTRAFMAALQSWLRSRSRRDAALLVAAGGCLMLTLGLSNL.

The next 6 helical transmembrane spans lie at 5-25 (VLVL…VVLM), 38-58 (FLCG…VVLG), 66-86 (FSVA…AFAL), 141-161 (VSGL…AAIL), 171-191 (ALAV…PLVS), and 217-237 (DAAL…LSNL).

The protein belongs to the peptidoglycolipid addressing protein (GAP) (TC 2.A.116) family.

The protein localises to the cell inner membrane. In terms of biological role, required for the transport across the inner membrane of sulfolipid-1 (SL-1), which is a major cell wall lipid of pathogenic mycobacteria. Could also transport SL1278 (2-palmitoyl-3-(C43)-phthioceranyl-alpha, alpha'-D-trehalose-2'-sulfate), which is the precursor of SL-1. May potentiate SL-1 levels and confer specificity for sulfolipids over structurally similar glycolipids. This Mycobacterium tuberculosis (strain ATCC 25618 / H37Rv) protein is Sulfolipid-1 exporter Sap.